A 117-amino-acid polypeptide reads, in one-letter code: Large ribosomal subunit protein uL18 (117 aa).

It belongs to the universal ribosomal protein uL18 family. As to quaternary structure, part of the 50S ribosomal subunit; part of the 5S rRNA/L5/L18/L25 subcomplex. Contacts the 5S and 23S rRNAs.

Functionally, this is one of the proteins that bind and probably mediate the attachment of the 5S RNA into the large ribosomal subunit, where it forms part of the central protuberance. The protein is Large ribosomal subunit protein uL18 of Pectobacterium carotovorum subsp. carotovorum (strain PC1).